Consider the following 963-residue polypeptide: MVGWGVAVLCLWVSCGAAAGQLEYSVPEETERGVAVGNLSADLRLPAAAMSSRNFRFLSSHRELYFGVDLPSGNLVVREPADREQLCRAKAACVLTYDLVLEDPLELHKIRIHVLDTNDNSPLFPAGDVQLHIPEFLTPGARFALPNAQDDDEGSNGILSYSLSPSQHFRLDMGSRVDGSEYPELVLEKALDREQRATHLLVLTARDGGLPARSGDAQVTIIVVDTNDNAPVFERSVYRTKVPETAPNGTVLFRVQALDPDEGSNGEVQYSLSNSTQAELRHRFHVHPKSGEVQVAASLGPPETLLEAYIEARDEGVFGLASTAKLLVEVTDVNDHAPELDFLTLSNPVPEDAAPGTVIALFSVKDEDLDSNGRVICGMSSAGPFQLTASFDNYYSLLIDGPLDREQISEYQVLITASDSGSPPLSTRRTITVSVADVNDNTPSFPQPQQELFIAENNGPGASLGRVFAQDPDLGKNGLVSYELLDVISEGPSASSLVAVESSSGAITAKTSFDFEQLRGFHFQVEGRDGGIPPRSATVTINLFVVDRNDNYPVILFPLPRNCSVPVEIVPRSARTGHLVTKVVAEDADSGSNAWLSYHISRASDSSLFRISANIGELRTARLVLPTDAVKQRVVVVVRDHGDPPLSSSVTLGVLLSNSVPQLLPDFEDVWEPGGQLSAQNLYLVIALACISFLFLGCLLFFVCTKLHQSPGCCAQSCCRSTEDLRYGRKMVSNPCMTSATIDVTTVERLSQTYLYRASLGLGSDNNSLLLRGEYNAADLRNLATGVGLNLPISCIQIRNRKGDHANVNAMPRQPNPDWRYSASLRAGMHSSVHLEEAGILRAGPGGPDQQWPTVSSATPEPEAGEVSPPVGAGVNSNSWTFKYGPGNPKQSGPGELPDKFIIPGSPAIISIRQEPANSQIDKSDFITFGKKEETKKKKKKKKGNKTQEKKEKGNSTTDNSDQ.

A signal peptide spans 1 to 18; it reads MVGWGVAVLCLWVSCGAA. Cadherin domains follow at residues 19-124, 125-233, 234-340, 349-445, and 446-555; these read AGQL…SPLF, PAGD…APVF, ERSV…APEL, VPED…TPSF, and PQPQ…YPVI. Over 19-683 the chain is Extracellular; that stretch reads AGQLEYSVPE…GGQLSAQNLY (665 aa). An N-linked (GlcNAc...) asparagine glycan is attached at Asn-38. 2 N-linked (GlcNAc...) asparagine glycosylation sites follow: Asn-248 and Asn-274. N-linked (GlcNAc...) asparagine glycosylation is present at Asn-562. One can recognise a Cadherin 6 domain in the interval 570–667; the sequence is VPRSARTGHL…NSVPQLLPDF (98 aa). The chain crosses the membrane as a helical span at residues 684-704; sequence LVIALACISFLFLGCLLFFVC. Topologically, residues 705-963 are cytoplasmic; the sequence is TKLHQSPGCC…GNSTTDNSDQ (259 aa). PXXP repeat units follow at residues 812–815, 845–848, 886–889, and 904–907; these read PRQP, PGGP, PGNP, and PGSP. The interval 812–907 is 4 X 4 AA repeats of P-X-X-P; that stretch reads PRQPNPDWRY…PDKFIIPGSP (96 aa). Residues 844 to 902 are disordered; sequence GPGGPDQQWPTVSSATPEPEAGEVSPPVGAGVNSNSWTFKYGPGNPKQSGPGELPDKFI. The segment at 914-963 is disordered; that stretch reads QEPANSQIDKSDFITFGKKEETKKKKKKKKGNKTQEKKEKGNSTTDNSDQ. Residues 922 to 936 show a composition bias toward basic and acidic residues; it reads DKSDFITFGKKEETK.

The protein resides in the cell membrane. Functionally, potential calcium-dependent cell-adhesion protein. May be involved in the establishment and maintenance of specific neuronal connections in the brain. The sequence is that of Protocadherin alpha-C1 (PCDHAC1) from Pan troglodytes (Chimpanzee).